Consider the following 642-residue polypeptide: Zinc finger protein 14 (642 aa).

The 73-residue stretch at 4-76 (VSFEDVAVNF…MVERLCESRK (73 aa)) folds into the KRAB domain. Residues 103–125 (HECSFCGRDFMHHSSLNRHMRSH) form a C2H2-type 1 zinc finger. A C2H2-type 2; degenerate zinc finger spans residues 141–163 (RKHKAVEKTFSYHHCFRKHERTH). The C2H2-type 3 zinc finger occupies 169-191 (YECKQCGKAFIYYQPFQRHERTH). The C2H2-type 4; atypical zinc-finger motif lies at 197–217 (YECKQCGKTFIYYQSFQQHAH). C2H2-type zinc fingers lie at residues 223–245 (YECK…ERTH), 251–273 (YECK…ERTH), 279–301 (YKCK…KRTH), 307–329 (YECK…VITH), 335–357 (YKCK…ERTH), 363–385 (YECK…ERTH), 391–413 (YECK…ETTH), 419–441 (YECK…ERTH), 447–469 (YECK…ERSH), 475–497 (YECK…ERTH), 503–525 (YECK…EKIH), 531–553 (FECK…ERTH), 559–581 (YQCK…ERTH), 587–609 (YRCK…ERSH), and 615–637 (YECK…ERTH).

Belongs to the krueppel C2H2-type zinc-finger protein family.

It localises to the nucleus. May be involved in transcriptional regulation. In Pongo abelii (Sumatran orangutan), this protein is Zinc finger protein 14 (ZNF14).